The sequence spans 421 residues: Ubiquitin-like modifier-activating enzyme 5 (421 aa).

Gly89, Asp110, Lys133, Asn156, and Asn191 together coordinate ATP. The Zn(2+) site is built by Cys233 and Cys236. The active-site Glycyl thioester intermediate is the Cys257. 2 residues coordinate Zn(2+): Cys310 and Cys315.

It belongs to the ubiquitin-activating E1 family. UBA5 subfamily.

Its function is as follows. E1-like enzyme which activates UFM1. The polypeptide is Ubiquitin-like modifier-activating enzyme 5 (Oryza sativa subsp. japonica (Rice)).